Consider the following 290-residue polypeptide: 4-hydroxybenzoate octaprenyltransferase (290 aa).

9 consecutive transmembrane segments (helical) span residues Ile23–Tyr43, Leu46–Ile66, Ala96–Ile116, Thr118–Tyr138, Leu141–Thr161, Cys169–Ile189, Ile212–Ile232, Leu235–Trp255, and Leu265–Leu285.

The protein belongs to the UbiA prenyltransferase family. Requires Mg(2+) as cofactor.

It is found in the cell inner membrane. The catalysed reaction is all-trans-octaprenyl diphosphate + 4-hydroxybenzoate = 4-hydroxy-3-(all-trans-octaprenyl)benzoate + diphosphate. Its pathway is cofactor biosynthesis; ubiquinone biosynthesis. In terms of biological role, catalyzes the prenylation of para-hydroxybenzoate (PHB) with an all-trans polyprenyl group. Mediates the second step in the final reaction sequence of ubiquinone-8 (UQ-8) biosynthesis, which is the condensation of the polyisoprenoid side chain with PHB, generating the first membrane-bound Q intermediate 3-octaprenyl-4-hydroxybenzoate. The chain is 4-hydroxybenzoate octaprenyltransferase from Acinetobacter baylyi (strain ATCC 33305 / BD413 / ADP1).